We begin with the raw amino-acid sequence, 204 residues long: MAGSRRKSPGITPDILLRAYSIGLFPMAESADDPEIFWVEPELRGVLPFDHFHVSKSLAKTVRKKPFEIRFDHAFDQVIAACAEETSGRPSTWINRTIRSLYSTLFDMGHAHTVEAWEGNELVGGLYGVSLGSAFFGESMFSRRTDASKICLVHLVDRLRERGFTLLDTQFTTEHLKTFGAIDVPKADYAAMLTAAMESPHLKF.

The protein belongs to the L/F-transferase family.

The protein resides in the cytoplasm. It catalyses the reaction N-terminal L-lysyl-[protein] + L-leucyl-tRNA(Leu) = N-terminal L-leucyl-L-lysyl-[protein] + tRNA(Leu) + H(+). The enzyme catalyses N-terminal L-arginyl-[protein] + L-leucyl-tRNA(Leu) = N-terminal L-leucyl-L-arginyl-[protein] + tRNA(Leu) + H(+). It carries out the reaction L-phenylalanyl-tRNA(Phe) + an N-terminal L-alpha-aminoacyl-[protein] = an N-terminal L-phenylalanyl-L-alpha-aminoacyl-[protein] + tRNA(Phe). Functionally, functions in the N-end rule pathway of protein degradation where it conjugates Leu, Phe and, less efficiently, Met from aminoacyl-tRNAs to the N-termini of proteins containing an N-terminal arginine or lysine. In Rhizobium johnstonii (strain DSM 114642 / LMG 32736 / 3841) (Rhizobium leguminosarum bv. viciae), this protein is Leucyl/phenylalanyl-tRNA--protein transferase.